The sequence spans 499 residues: Glycerol kinase (499 aa).

Thr-17 contributes to the ADP binding site. Residues Thr-17, Thr-18, and Ser-19 each coordinate ATP. Position 17 (Thr-17) interacts with sn-glycerol 3-phosphate. Residue Arg-21 participates in ADP binding. Residues Arg-87, Glu-88, Tyr-139, and Asp-243 each contribute to the sn-glycerol 3-phosphate site. 5 residues coordinate glycerol: Arg-87, Glu-88, Tyr-139, Asp-243, and Gln-244. ADP contacts are provided by Thr-265 and Gly-308. ATP-binding residues include Thr-265, Gly-308, Gln-312, and Gly-409. Gly-409 and Asn-413 together coordinate ADP.

It belongs to the FGGY kinase family.

It carries out the reaction glycerol + ATP = sn-glycerol 3-phosphate + ADP + H(+). Its pathway is polyol metabolism; glycerol degradation via glycerol kinase pathway; sn-glycerol 3-phosphate from glycerol: step 1/1. Its activity is regulated as follows. Inhibited by fructose 1,6-bisphosphate (FBP). Its function is as follows. Key enzyme in the regulation of glycerol uptake and metabolism. Catalyzes the phosphorylation of glycerol to yield sn-glycerol 3-phosphate. This chain is Glycerol kinase, found in Pseudomonas putida (strain GB-1).